Here is a 206-residue protein sequence, read N- to C-terminus: Thymidylate kinase (206 aa).

10–17 (GIDGAGKS) contributes to the ATP binding site.

The protein belongs to the thymidylate kinase family.

It carries out the reaction dTMP + ATP = dTDP + ADP. Its function is as follows. Phosphorylation of dTMP to form dTDP in both de novo and salvage pathways of dTTP synthesis. The polypeptide is Thymidylate kinase (Neisseria gonorrhoeae (strain ATCC 700825 / FA 1090)).